Here is a 527-residue protein sequence, read N- to C-terminus: UDP-glucuronosyltransferase 2A1 (527 aa).

Positions 1 to 20 (MLKNILLWSLQLSLLGMSLG) are cleaved as a signal peptide. At 21-490 (GNVLIWPMEG…LSWFQYHSLD (470 aa)) the chain is on the extracellular side. The N-linked (GlcNAc...) asparagine glycan is linked to asparagine 49. Lysine 134 is subject to N6-succinyllysine. A glycan (N-linked (GlcNAc...) asparagine) is linked at asparagine 313. A helical membrane pass occupies residues 491–507 (VIGFLLACMASAILLVI). Residues 508-527 (KCCLFVFQKIGKTXKKNKRD) are Cytoplasmic-facing.

The protein belongs to the UDP-glycosyltransferase family. As to expression, olfactory epithelium. Mainly found in the sustentacular cells and to a lesser extent in Bowman's gland cells. Also expressed in the olfactory sensory neuron nuclei. Neuronal localization within the olfactory bulb is mainly found in the deeper granular cells.

It localises to the membrane. The enzyme catalyses glucuronate acceptor + UDP-alpha-D-glucuronate = acceptor beta-D-glucuronoside + UDP + H(+). The catalysed reaction is 16beta,17beta-estriol + UDP-alpha-D-glucuronate = 16beta,17beta-estriol 16-O-(beta-D-glucuronate) + UDP + H(+). It catalyses the reaction 16alpha,17alpha-estriol + UDP-alpha-D-glucuronate = 16alpha,17alpha-estriol 16-O-(beta-D-glucuronate) + UDP + H(+). It carries out the reaction 17alpha-estradiol + UDP-alpha-D-glucuronate = 17alpha-estradiol 17-O-(beta-D-glucuronate) + UDP + H(+). The enzyme catalyses 17alpha-estradiol + UDP-alpha-D-glucuronate = 17alpha-estradiol 3-O-(beta-D-glucuronate) + UDP + H(+). The catalysed reaction is 17beta-estradiol + UDP-alpha-D-glucuronate = 17beta-estradiol 3-O-(beta-D-glucuronate) + UDP + H(+). It catalyses the reaction 17beta-estradiol + UDP-alpha-D-glucuronate = 17beta-estradiol 17-O-(beta-D-glucuronate) + UDP + H(+). It carries out the reaction testosterone + UDP-alpha-D-glucuronate = testosterone 17-O-(beta-D-glucuronate) + UDP + H(+). The enzyme catalyses epitestosterone + UDP-alpha-D-glucuronate = epitestosterone 17-O-(beta-D-glucuronate) + UDP + H(+). The catalysed reaction is lithocholate + UDP-alpha-D-glucuronate = lithocholoyl-3-O-(beta-D-glucuronate) + UDP + H(+). It catalyses the reaction lithocholate + UDP-alpha-D-glucuronate = lithocholoyl-24-O-(beta-D-glucuronate) + UDP. It carries out the reaction deoxycholate + UDP-alpha-D-glucuronate = deoxycholoyl-24-O-(beta-D-glucuronate) + UDP. The enzyme catalyses hyodeoxycholate + UDP-alpha-D-glucuronate = hyodeoxycholate 6-O-(beta-D-glucuronate) + UDP + H(+). The catalysed reaction is hyocholate + UDP-alpha-D-glucuronate = hyocholoyl-24-O-(beta-D-glucuronate) + UDP. Functionally, UDP-glucuronosyltransferase (UGT) that catalyzes phase II biotransformation reactions in which lipophilic substrates are conjugated with glucuronic acid to increase the metabolite's water solubility, thereby facilitating excretion into either the urine or bile. Essential for the elimination and detoxification of drugs, xenobiotics and endogenous compounds. Catalyzes the glucuronidation of endogenous steroid hormones such as androgens (testosterones) and estrogens (estradiol and estriol). Contributes to bile acid (BA) detoxification by catalyzing the glucuronidation of BA substrates, which are natural detergents for dietary lipids absorption. Shows a high affinity to aliphatic odorants such as citronellol as well as olfactory tissue specificity, and therefore may be involved in olfaction. This is UDP-glucuronosyltransferase 2A1 from Rattus norvegicus (Rat).